The chain runs to 292 residues: RWD domain-containing protein 2A (292 aa).

One can recognise an RWD domain in the interval 14–134 (LEMEMLFSMF…QWLQDNSASY (121 aa)).

The polypeptide is RWD domain-containing protein 2A (RWDD2A) (Macaca fascicularis (Crab-eating macaque)).